A 97-amino-acid chain; its full sequence is Co-chaperonin GroES (97 aa).

It belongs to the GroES chaperonin family. As to quaternary structure, heptamer of 7 subunits arranged in a ring. Interacts with the chaperonin GroEL.

It localises to the cytoplasm. In terms of biological role, together with the chaperonin GroEL, plays an essential role in assisting protein folding. The GroEL-GroES system forms a nano-cage that allows encapsulation of the non-native substrate proteins and provides a physical environment optimized to promote and accelerate protein folding. GroES binds to the apical surface of the GroEL ring, thereby capping the opening of the GroEL channel. This Aeromonas salmonicida protein is Co-chaperonin GroES.